The following is an 818-amino-acid chain: Glycerol-3-phosphate acyltransferase (818 aa).

The short motif at 305–310 (HRSHMD) is the HXXXXD motif element.

The protein belongs to the GPAT/DAPAT family.

Its subcellular location is the cell inner membrane. It carries out the reaction sn-glycerol 3-phosphate + an acyl-CoA = a 1-acyl-sn-glycero-3-phosphate + CoA. Its pathway is phospholipid metabolism; CDP-diacylglycerol biosynthesis; CDP-diacylglycerol from sn-glycerol 3-phosphate: step 1/3. The protein is Glycerol-3-phosphate acyltransferase of Photorhabdus laumondii subsp. laumondii (strain DSM 15139 / CIP 105565 / TT01) (Photorhabdus luminescens subsp. laumondii).